A 399-amino-acid polypeptide reads, in one-letter code: Cell division protein DivIB (399 aa).

2 disordered regions span residues 1–23 and 35–119; these read MSKD…SEWQ and EEEA…ATKE. Residues 1-133 lie on the Cytoplasmic side of the membrane; it reads MSKDKKNEDK…AKIPGIHILR (133 aa). Composition is skewed to basic and acidic residues over residues 35–65 and 75–119; these read EEEA…KQDQ and ESAK…ATKE. The chain crosses the membrane as a helical span at residues 134-154; it reads AFTILFPSLLLLFVSAYLLSP. At 155–399 the chain is on the extracellular side; sequence YATMKDIRVE…NQTTQRSSRR (245 aa). The POTRA domain maps to 156-226; it reads ATMKDIRVEG…TKFTIKVKEY (71 aa). Positions 364-388 are enriched in basic and acidic residues; sequence KAKQEAKEAEKKQEEEQKKQEEESN. Positions 364 to 399 are disordered; sequence KAKQEAKEAEKKQEEEQKKQEEESNRNQTTQRSSRR. Over residues 389–399 the composition is skewed to polar residues; that stretch reads RNQTTQRSSRR.

Belongs to the FtsQ/DivIB family. DivIB subfamily.

It is found in the cell membrane. Its function is as follows. Cell division protein that may be involved in stabilizing or promoting the assembly of the division complex. This is Cell division protein DivIB from Streptococcus pneumoniae serotype 4 (strain ATCC BAA-334 / TIGR4).